Consider the following 1238-residue polypeptide: Topoisomerase 1-associated factor 1 (1238 aa).

Serine 626 and serine 654 each carry phosphoserine. The segment at 1008–1051 (GIARSKKKDKRKRRKGEAKTNLPMFGDQDDERPQTVRERHGVFS) is disordered. Positions 1010-1023 (ARSKKKDKRKRRKG) are enriched in basic residues. Basic and acidic residues predominate over residues 1038-1050 (ERPQTVRERHGVF). Phosphoserine is present on residues serine 1056 and serine 1058. The segment at 1159–1218 (NNNNNQLSDDDVNSESRNSLGSSQPSNSQNMFQSEVYSRKESTKRSLEASAADESDEDEE) is disordered. The span at 1173 to 1194 (ESRNSLGSSQPSNSQNMFQSEV) shows a compositional bias: polar residues. A compositionally biased stretch (basic and acidic residues) spans 1195 to 1205 (YSRKESTKRSL). The segment covering 1209–1218 (AADESDEDEE) has biased composition (acidic residues). The residue at position 1213 (serine 1213) is a Phosphoserine.

Belongs to the timeless family. Component of the fork protection complex (FPC) consisting of TOF1 and CSM3. Interacts with WSS1 and ESC4.

The protein resides in the nucleus. Functionally, forms a fork protection complex (FPC) with CSM3 and which is required for chromosome segregation during meiosis and DNA damage repair. FPC coordinates leading and lagging strand synthesis and moves with the replication fork. FPC stabilizes replication forks in a configuration that is recognized by replication checkpoint sensors and protects stalled replication forks against the fork-releasing activity of RRM3 helicase. The sequence is that of Topoisomerase 1-associated factor 1 (TOF1) from Saccharomyces cerevisiae (strain ATCC 204508 / S288c) (Baker's yeast).